We begin with the raw amino-acid sequence, 149 residues long: Ribonuclease H (149 aa).

The 142-residue stretch at 1 to 142 (MSDSVELFTD…ADQLANRGVD (142 aa)) folds into the RNase H type-1 domain. Residues aspartate 10, glutamate 48, aspartate 70, and aspartate 134 each contribute to the Mg(2+) site.

This sequence belongs to the RNase H family. Monomer. Mg(2+) is required as a cofactor.

The protein localises to the cytoplasm. It catalyses the reaction Endonucleolytic cleavage to 5'-phosphomonoester.. Functionally, endonuclease that specifically degrades the RNA of RNA-DNA hybrids. The sequence is that of Ribonuclease H from Pseudomonas savastanoi pv. phaseolicola (strain 1448A / Race 6) (Pseudomonas syringae pv. phaseolicola (strain 1448A / Race 6)).